A 50-amino-acid chain; its full sequence is Insulin (50 aa).

Intrachain disulfides connect Cys-7/Cys-36, Cys-19/Cys-49, and Cys-35/Cys-40.

Belongs to the insulin family. In terms of assembly, heterodimer of a B chain and an A chain linked by two disulfide bonds.

The protein resides in the secreted. Its function is as follows. Insulin decreases blood glucose concentration. It increases cell permeability to monosaccharides, amino acids and fatty acids. It accelerates glycolysis, the pentose phosphate cycle, and glycogen synthesis in liver. This is Insulin (ins) from Katsuwonus pelamis (Skipjack tuna).